The chain runs to 478 residues: Noelin-2 (478 aa).

The first 16 residues, 1 to 16, serve as a signal peptide directing secretion; it reads MSVPLLKIGAVLSTMA. Residues N33, N98, N179, N299, N334, N423, and N465 are each glycosylated (N-linked (GlcNAc...) asparagine). Coiled coils occupy residues 86–109 and 160–218; these read SREL…LELR and LEQY…QKLG. An Olfactomedin-like domain is found at 218–470; sequence GCGKLTGVSN…QVLYNVTLFH (253 aa). C219 and C401 are joined by a disulfide.

In terms of assembly, peripherally associated with AMPAR complex. AMPAR complex consists of an inner core made of 4 pore-forming GluA/GRIA proteins (GRIA1, GRIA2, GRIA3 and GRIA4) and 4 major auxiliary subunits arranged in a twofold symmetry. One of the two pairs of distinct binding sites is occupied either by CNIH2, CNIH3 or CACNG2, CACNG3. The other harbors CACNG2, CACNG3, CACNG4, CACNG8 or GSG1L. This inner core of AMPAR complex is complemented by outer core constituents binding directly to the GluA/GRIA proteins at sites distinct from the interaction sites of the inner core constituents. Outer core constituents include at least PRRT1, PRRT2, CKAMP44/SHISA9, FRRS1L and NRN1. The proteins of the inner and outer core serve as a platform for other, more peripherally associated AMPAR constituents, including OLFM2. Alone or in combination, these auxiliary subunits control the gating and pharmacology of the AMPAR complex and profoundly impact their biogenesis and protein processing. Interacts with GRIA2. Interacts with OLFM1 and OLFM3. Interacts with SRF; the interaction promotes dissociation of SRF from the transcriptional repressor HEY2. Interacts with RUNX2. In terms of tissue distribution, expressed in the brain (at protein level). Expressed in carotid arteries and the aorta, mainly in aortic SMCs.

Its subcellular location is the secreted. The protein localises to the synapse. It localises to the membrane. The protein resides in the nucleus. It is found in the cytoplasm. Involved in transforming growth factor beta (TGF-beta)-induced smooth muscle differentiation. TGF-beta induces expression and nuclear translocation of OLFM2 where it binds to SRF, causing its dissociation from the transcriptional repressor HEY2/HERP1 and facilitating binding of SRF to target genes. Plays a role in AMPAR complex organization. Is a regulator of vascular smooth-muscle cell (SMC) phenotypic switching, that acts by promoting RUNX2 and inhibiting MYOCD binding to SRF. SMC phenotypic switching is the process through which vascular SMCs undergo transition between a quiescent contractile phenotype and a proliferative synthetic phenotype in response to pathological stimuli. SMC phenotypic plasticity is essential for vascular development and remodeling. In Rattus norvegicus (Rat), this protein is Noelin-2 (Olfm2).